Here is a 707-residue protein sequence, read N- to C-terminus: MPSATSHSGSGSKSSGPPPPSGSSGSEAAAGAAAPASQHPATGTGAVQTEAMKQILGVIDKKLRNLEKKKGKLDDYQERMNKGERLNQDQLDAVSKYQEVTNNLEFAKELQRSFMALSQDIQKTIKKTARREQLMREEAEQKRLKTVLELQYVLDKLGDDDVRTDLKQGLSGVPILSEEELSLLDEFYKLVDPERDMSLRLNEQYEHASIHLWDLLEGKEKPVCGTTYKALKEIVERVFQSNYFDSTHNHQNGLCEEEEAASAPIVEDQVAEAEPEPTEEYTEQSEVESTEYVNRQFMAETQFSSGEKEQVDEWAVETVEVVNSLQQQPQAASPSVPEPHSLTPVAQSDPLVRRQRVQDLMAQMQGPYNFIQDSMLDFENQTLDPAIVSAQPMNPTQNMDMPQLVCPQVHSESRLAQSNQVPVQPEATQVPLVSSTSEGYTASQPLYQPSHAAEQRPQKEPIDQIQATISLNTEQTTASSSLPAASQPQVFQAGASKPLHSSGINVNAAPFQSMQTVFNMNAPVPPVNEPETLKQQSQYQASYNQSFSSQPHQVEQTELQQDQLQTVVGTYHGSQDQPHQVPGNHQQPPQQSTGFPRSSQPYYNSRGVSRGGSRGARGLMNGYRGPANGFRGGYDGYRSSFSNTPNSGYTQSQFNAPRDYSGYQRDGYQQNFKRGSGQSGPRGAPRGRGGPPRPNRGMPQMNTQQVN.

Low complexity-rich tracts occupy residues 1 to 15 (MPSATSHSGSGSKSS) and 22 to 43 (GSSGSEAAAGAAAPASQHPATG). Positions 1-48 (MPSATSHSGSGSKSSGPPPPSGSSGSEAAAGAAAPASQHPATGTGAVQ) are disordered. The residue at position 2 (proline 2) is an N-acetylproline. Serine 10 bears the Phosphoserine mark. The stretch at 58–92 (VIDKKLRNLEKKKGKLDDYQERMNKGERLNQDQLD) forms a coiled coil. Serine 113 carries the phosphoserine modification. Residues 123 to 151 (KTIKKTARREQLMREEAEQKRLKTVLELQ) adopt a coiled-coil conformation. An Omega-N-methylarginine modification is found at arginine 163. Positions 325 to 347 (LQQQPQAASPSVPEPHSLTPVAQ) are disordered. The segment covering 326–335 (QQQPQAASPS) has biased composition (low complexity). 2 positions are modified to phosphoserine: serine 333 and serine 341. The segment at 358 to 379 (QDLMAQMQGPYNFIQDSMLDFE) is G3BP1-binding. 3 disordered regions span residues 412 to 443 (ESRLAQSNQVPVQPEATQVPLVSSTSEGYTAS), 523 to 558 (PVPPVNEPETLKQQSQYQASYNQSFSSQPHQVEQTE), and 570 to 620 (TYHG…RGLM). Polar residues predominate over residues 431–443 (PLVSSTSEGYTAS). The span at 535 to 558 (QQSQYQASYNQSFSSQPHQVEQTE) shows a compositional bias: low complexity. Over residues 572-603 (HGSQDQPHQVPGNHQQPPQQSTGFPRSSQPYY) the composition is skewed to polar residues. Position 623 is a phosphotyrosine (tyrosine 623). Arginine 624 and arginine 631 each carry omega-N-methylarginine. 2 positions are modified to phosphotyrosine: tyrosine 634 and tyrosine 637. Omega-N-methylarginine is present on arginine 638. A compositionally biased stretch (polar residues) spans 641–655 (FSNTPNSGYTQSQFN). Residues 641–707 (FSNTPNSGYT…MPQMNTQQVN (67 aa)) form a disordered region. O-linked (GlcNAc) serine glycans are attached at residues serine 642 and serine 647. Residues tyrosine 649, tyrosine 660, tyrosine 663, and tyrosine 668 each carry the phosphotyrosine modification. Low complexity-rich tracts occupy residues 674–684 (RGSGQSGPRGA) and 695–707 (NRGMPQMNTQQVN). Arginine 696 carries the post-translational modification Asymmetric dimethylarginine; alternate. Arginine 696 carries the omega-N-methylarginine; alternate modification.

The protein belongs to the caprin family. May form homomultimers. Interacts with G3BP1; interaction is direct and promotes stress granule formation. Interacts with G3BP2; interaction is direct and promotes stress granule formation. Interacts with PQBP1. Interacts with DDX3X. Interacts (when phosphorylated by EPHA4) with FMR1; interaction with FMR1 promotes formation of a membraneless compartment. In terms of processing, tyrosine phosphorylation by EPHA4 promotes interaction with FMR1 and liquid-liquid phase separation (LLPS) for the formation of a membraneless compartment that concentrates mRNAs with associated regulatory factors. O-glycosylated (O-GlcNAcylated), in a cell cycle-dependent manner. O-glycosylation by OGT inhibit ability to undergo liquid-liquid phase separation (LLPS). Expressed in hippocampal and neocortical pyramidal neurons, but not in Purkinje cells.

The protein resides in the cytoplasm. Its subcellular location is the cytoplasmic ribonucleoprotein granule. It is found in the cytosol. The protein localises to the cell projection. It localises to the dendrite. The protein resides in the lamellipodium. With respect to regulation, ability to mediate liquid-liquid phase separation is regulated by ATP: moderate concentrations of ATP enhance phase separation, whereas high concentrations of ATP lead to inhibition of phase separation. Its function is as follows. mRNA-binding protein that acts as a regulator of mRNAs transport, translation and/or stability, and which is involved in neurogenesis, synaptic plasticity in neurons and cell proliferation and migration in multiple cell types. Plays an essential role in cytoplasmic stress granule formation. Acts as an mRNA regulator by mediating formation of some phase-separated membraneless compartment: undergoes liquid-liquid phase separation upon binding to target mRNAs, leading to assemble mRNAs into cytoplasmic ribonucleoprotein granules that concentrate mRNAs with associated regulatory factors. Undergoes liquid-liquid phase separation following phosphorylation and interaction with FMR1, promoting formation of cytoplasmic ribonucleoprotein granules that concentrate mRNAs with factors that inhibit translation and mediate deadenylation of target mRNAs. In these cytoplasmic ribonucleoprotein granules, CAPRIN1 mediates recruitment of CNOT7 deadenylase, leading to mRNA deadenylation and degradation. Binds directly and selectively to MYC and CCND2 mRNAs. In neuronal cells, directly binds to several mRNAs associated with RNA granules, including BDNF, CAMK2A, CREB1, MAP2, NTRK2 mRNAs, as well as to GRIN1 and KPNB1 mRNAs, but not to rRNAs. In Rattus norvegicus (Rat), this protein is Caprin-1 (Caprin1).